Here is a 159-residue protein sequence, read N- to C-terminus: uncharacterized protein (159 aa).

The next 4 membrane-spanning stretches (helical) occupy residues 22 to 42, 45 to 65, 80 to 100, and 104 to 124; these read LFSS…SFTI, PIEY…LLTL, IWVS…SLSL, and FPSL…CLAF.

Its subcellular location is the membrane. This is an uncharacterized protein from Schizosaccharomyces pombe (strain 972 / ATCC 24843) (Fission yeast).